We begin with the raw amino-acid sequence, 186 residues long: LSM12 homolog B (186 aa).

The 74-residue stretch at 1 to 74 (MSSLAPCFTV…CMDIEIVKEA (74 aa)) folds into the Sm domain. One can recognise an AD domain in the interval 84–186 (EPIDLPMIRE…VVQNFCSKQF (103 aa)).

This sequence belongs to the LSM12 family. In terms of assembly, interacts with Sbat; along with Sbat and Vlet, may form an accessory subcomplex involved in SMN complex function.

In terms of biological role, may have an accessory function in the survival motor neuron (SMN) complex. This chain is LSM12 homolog B, found in Drosophila melanogaster (Fruit fly).